The chain runs to 564 residues: Cysteine--tRNA ligase CPS1, chloroplastic/mitochondrial (564 aa).

Residues 1–43 (MAAAVVVRRAAGLIPLLSSRFGARMPLHRALSQIPPPRFCRLL) constitute a chloroplast and mitochondrion transit peptide. C93 contacts Zn(2+). The 'HIGH' region motif lies at 95–105 (VTPYDDSHIGH). C273, H298, and E302 together coordinate Zn(2+). The short motif at 330 to 334 (KMSKS) is the 'KMSKS' region element. K333 is a binding site for ATP.

This sequence belongs to the class-I aminoacyl-tRNA synthetase family. It depends on Zn(2+) as a cofactor.

It is found in the plastid. Its subcellular location is the chloroplast. The protein resides in the mitochondrion. It catalyses the reaction tRNA(Cys) + L-cysteine + ATP = L-cysteinyl-tRNA(Cys) + AMP + diphosphate. Functionally, nuclear genome-encoded factor required for normal assembly of chloroplast polysomes. The chain is Cysteine--tRNA ligase CPS1, chloroplastic/mitochondrial from Zea mays (Maize).